A 336-amino-acid polypeptide reads, in one-letter code: MTIPLRFGYKASSEQFGPNELLDFGVLAEEMGFDSVFLSDHLQPWMHDGGHAPNALPWLGALGARTERVIIGTSVLTPTFRYHPGVIAQVFATLGVMYPGRVVLGVGTGEALNEVTLGLEWPEAPERFQRLKEAITIINELWAGERVTYEGTYYSVKDATIYDRPEQKVPIYIGASGPAATRLAGRIAEGYITTSGKDPELYTEKLLPALDDGLSKAGRTRDDVDTLMEVKVSYHPDHDTALEKTRFWAPLALTAEEKMSVHDPIEMQRLANELPIERAASRFIVSTDPDEHVERIARYVDLGFRHLVFHDPGHDQEQFLRMYGEEILPRLRKRFA.

A coenzyme F420-(gamma-Glu)n-binding site is contributed by Asp-40. His-41 acts as the Proton donor in catalysis. Coenzyme F420-(gamma-Glu)n contacts are provided by residues Thr-77 and 108–109 (TG). The active-site Proton acceptor is the Glu-110. Coenzyme F420-(gamma-Glu)n-binding positions include Asn-113, 176-177 (SG), and 179-180 (AA). Residues Thr-194, Lys-197, Lys-258, and Arg-282 each contribute to the substrate site.

This sequence belongs to the F420-dependent glucose-6-phosphate dehydrogenase family. As to quaternary structure, homodimer.

The catalysed reaction is oxidized coenzyme F420-(gamma-L-Glu)(n) + D-glucose 6-phosphate + H(+) = 6-phospho-D-glucono-1,5-lactone + reduced coenzyme F420-(gamma-L-Glu)(n). In terms of biological role, catalyzes the coenzyme F420-dependent oxidation of glucose 6-phosphate (G6P) to 6-phosphogluconolactone. This Microbacterium testaceum (strain StLB037) protein is F420-dependent glucose-6-phosphate dehydrogenase.